Reading from the N-terminus, the 129-residue chain is Large ribosomal subunit protein bL19 (129 aa).

Functionally, this protein is located at the 30S-50S ribosomal subunit interface and may play a role in the structure and function of the aminoacyl-tRNA binding site. This is Large ribosomal subunit protein bL19 from Rhodopseudomonas palustris (strain ATCC BAA-98 / CGA009).